Here is a 332-residue protein sequence, read N- to C-terminus: D-glutamate N-acetyltransferase (332 aa).

It belongs to the N-acetyltransferase DgcN family.

The catalysed reaction is D-glutamate + acetyl-CoA = N-acetyl-D-glutamate + CoA + H(+). The enzyme catalyses D-aspartate + acetyl-CoA = N-acetyl-D-aspartate + CoA + H(+). It carries out the reaction D-glutamine + acetyl-CoA = N-acetyl-D-glutamine + CoA + H(+). It participates in amino-acid degradation. Functionally, N-acetyltransferase involved in a deamination-independent D-glutamate degradation pathway, named the DgcN-DgcA pathway. Catalyzes the transfer of the acetyl moiety from acetyl-CoA to D-glutamate to generate N-acetyl-D-glutamate. Can also acetylate D-aspartate and D-glutamine, with lower efficiency. Has low activity with D-asparagine. Cannot use succinyl-CoA. The chain is D-glutamate N-acetyltransferase from Pseudoalteromonas sp.